Reading from the N-terminus, the 160-residue chain is MTEPQQQPVFVIEKVYVKDLSLEIPHAPQVFLERESPEINLQLATSDNVIEGEIHEVIVTATVTARLKEKDKVMFLVEAHQAGIFRIRNVPGNEIEPVLGVLCPNILFPYLRETISDTVTRAGFPPVILNPVNFEAIYQQKQQEAAVSQPDQPVDNTTRH.

This sequence belongs to the SecB family. As to quaternary structure, homotetramer, a dimer of dimers. One homotetramer interacts with 1 SecA dimer.

It is found in the cytoplasm. Its function is as follows. One of the proteins required for the normal export of preproteins out of the cell cytoplasm. It is a molecular chaperone that binds to a subset of precursor proteins, maintaining them in a translocation-competent state. It also specifically binds to its receptor SecA. In Nitrosomonas eutropha (strain DSM 101675 / C91 / Nm57), this protein is Protein-export protein SecB.